Here is a 594-residue protein sequence, read N- to C-terminus: Probable translation initiation factor IF-2 (594 aa).

In terms of domain architecture, tr-type G spans 11 to 226 (LRTPIVCVMG…LIGLAQRFLE (216 aa)). Residues 20–27 (GHVDHGKT) form a G1 region. Position 20-27 (20-27 (GHVDHGKT)) interacts with GTP. The tract at residues 45 to 49 (AITQH) is G2. The interval 81-84 (DTPG) is G3. GTP-binding positions include 81–85 (DTPGH) and 135–138 (NKID). Residues 135–138 (NKID) are G4. The tract at residues 203–205 (SAR) is G5.

This sequence belongs to the TRAFAC class translation factor GTPase superfamily. Classic translation factor GTPase family. IF-2 subfamily.

Its function is as follows. Function in general translation initiation by promoting the binding of the formylmethionine-tRNA to ribosomes. Seems to function along with eIF-2. In Methanocella arvoryzae (strain DSM 22066 / NBRC 105507 / MRE50), this protein is Probable translation initiation factor IF-2.